A 277-amino-acid polypeptide reads, in one-letter code: 2,3,4,5-tetrahydropyridine-2,6-dicarboxylate N-succinyltransferase (277 aa).

Substrate is bound by residues arginine 106 and aspartate 143.

This sequence belongs to the transferase hexapeptide repeat family. Homotrimer.

The protein resides in the cytoplasm. It catalyses the reaction (S)-2,3,4,5-tetrahydrodipicolinate + succinyl-CoA + H2O = (S)-2-succinylamino-6-oxoheptanedioate + CoA. It participates in amino-acid biosynthesis; L-lysine biosynthesis via DAP pathway; LL-2,6-diaminopimelate from (S)-tetrahydrodipicolinate (succinylase route): step 1/3. The sequence is that of 2,3,4,5-tetrahydropyridine-2,6-dicarboxylate N-succinyltransferase from Variovorax paradoxus (strain S110).